The following is a 224-amino-acid chain: Phosphoglycolate phosphatase (224 aa).

Residue Asp-11 is the Nucleophile of the active site. 3 residues coordinate Mg(2+): Asp-11, Asp-13, and Asp-177.

This sequence belongs to the HAD-like hydrolase superfamily. CbbY/CbbZ/Gph/YieH family. The cofactor is Mg(2+).

The catalysed reaction is 2-phosphoglycolate + H2O = glycolate + phosphate. Its pathway is organic acid metabolism; glycolate biosynthesis; glycolate from 2-phosphoglycolate: step 1/1. Specifically catalyzes the dephosphorylation of 2-phosphoglycolate. Is involved in the dissimilation of the intracellular 2-phosphoglycolate formed during the DNA repair of 3'-phosphoglycolate ends, a major class of DNA lesions induced by oxidative stress. This is Phosphoglycolate phosphatase from Haemophilus influenzae (strain 86-028NP).